A 492-amino-acid polypeptide reads, in one-letter code: Stromelysin-3 (492 aa).

Positions 1-35 are cleaved as a signal peptide; sequence MARAACLLRAISRVLLLPLPLLLLLLLLLPSPLMA. Positions 36 to 101 are cleaved as a propeptide — activation peptide; it reads RARPPESHRH…VLNARNRQKR (66 aa). Positions 82–89 match the Cysteine switch motif; sequence LRCGVPDL. Cys84, His168, and Asp170 together coordinate Zn(2+). Positions 175, 176, 178, and 180 each coordinate Ca(2+). Zn(2+) contacts are provided by His183, His196, and His219. The active site involves Glu220. 2 residues coordinate Zn(2+): His223 and His229. Hemopexin repeat units follow at residues 295–343, 344–386, 388–436, and 437–484; these read PDVC…WQGL, PSPV…KLGL, GSPV…WRGV, and PSEI…FFDC. A disulfide bridge links Cys298 with Cys484.

Belongs to the peptidase M10A family. It depends on Ca(2+) as a cofactor. Zn(2+) serves as cofactor. In terms of processing, the precursor is cleaved by a furin endopeptidase. Specifically expressed in the mammary gland during apoptosis.

It is found in the secreted. Its subcellular location is the extracellular space. The protein resides in the extracellular matrix. Functionally, may play an important role in the progression of epithelial malignancies. The polypeptide is Stromelysin-3 (Mmp11) (Mus musculus (Mouse)).